The chain runs to 398 residues: Cell cycle checkpoint control protein RAD9B (398 aa).

The span at 272–281 (RTSSPQSLRL) shows a compositional bias: polar residues. The tract at residues 272 to 359 (RTSSPQSLRL…DMEEGQSPSP (88 aa)) is disordered. Over residues 324 to 336 (SSSAAETRRASAS) the composition is skewed to low complexity. Residues Ser349 and Ser358 each carry the phosphoserine modification.

This sequence belongs to the rad9 family. As to quaternary structure, interacts with HUS1, HUS1B, RAD1, RAD9A and RAD17.

The chain is Cell cycle checkpoint control protein RAD9B (Rad9b) from Rattus norvegicus (Rat).